The sequence spans 601 residues: Putative Lon protease homolog (601 aa).

Residues 363–560 (GEIVGQINGL…YQACELLFGR (198 aa)) enclose the Lon proteolytic domain. Catalysis depends on residues serine 455 and lysine 498.

Belongs to the peptidase S16 family.

The polypeptide is Putative Lon protease homolog (Haemophilus influenzae (strain ATCC 51907 / DSM 11121 / KW20 / Rd)).